Here is a 297-residue protein sequence, read N- to C-terminus: Phosphoribosylaminoimidazole-succinocarboxamide synthase (297 aa).

This sequence belongs to the SAICAR synthetase family.

It catalyses the reaction 5-amino-1-(5-phospho-D-ribosyl)imidazole-4-carboxylate + L-aspartate + ATP = (2S)-2-[5-amino-1-(5-phospho-beta-D-ribosyl)imidazole-4-carboxamido]succinate + ADP + phosphate + 2 H(+). It functions in the pathway purine metabolism; IMP biosynthesis via de novo pathway; 5-amino-1-(5-phospho-D-ribosyl)imidazole-4-carboxamide from 5-amino-1-(5-phospho-D-ribosyl)imidazole-4-carboxylate: step 1/2. This is Phosphoribosylaminoimidazole-succinocarboxamide synthase from Rhodococcus erythropolis (strain PR4 / NBRC 100887).